The sequence spans 709 residues: Catalase HPII (709 aa).

The segment covering 1-26 (MSEQNNEQRSQAAGTDTVDRGNSNAK) has biased composition (polar residues). The tract at residues 1–32 (MSEQNNEQRSQAAGTDTVDRGNSNAKLEQLEA) is disordered. Active-site residues include H90 and N163. Y377 lines the heme pocket. Residues 419–443 (RASYEPNSIDGGWPKETPPAARNGG) are disordered.

It belongs to the catalase family. HPII subfamily. The cofactor is heme.

It localises to the cytoplasm. The enzyme catalyses 2 H2O2 = O2 + 2 H2O. Functionally, decomposes hydrogen peroxide into water and oxygen; serves to protect cells from the toxic effects of hydrogen peroxide. The protein is Catalase HPII (katE) of Pseudomonas aeruginosa (strain ATCC 15692 / DSM 22644 / CIP 104116 / JCM 14847 / LMG 12228 / 1C / PRS 101 / PAO1).